The sequence spans 262 residues: Indole-3-glycerol phosphate synthase (262 aa).

This sequence belongs to the TrpC family.

The catalysed reaction is 1-(2-carboxyphenylamino)-1-deoxy-D-ribulose 5-phosphate + H(+) = (1S,2R)-1-C-(indol-3-yl)glycerol 3-phosphate + CO2 + H2O. The protein operates within amino-acid biosynthesis; L-tryptophan biosynthesis; L-tryptophan from chorismate: step 4/5. The polypeptide is Indole-3-glycerol phosphate synthase (Clostridium kluyveri (strain NBRC 12016)).